A 399-amino-acid chain; its full sequence is 1-deoxy-D-xylulose 5-phosphate reductoisomerase (399 aa).

Thr13, Gly14, Ser15, Ile16, and Asn127 together coordinate NADPH. Lys128 is a 1-deoxy-D-xylulose 5-phosphate binding site. Glu129 provides a ligand contact to NADPH. Asp153 provides a ligand contact to Mn(2+). The 1-deoxy-D-xylulose 5-phosphate site is built by Ser154, Glu155, Ser187, and His210. Mn(2+) is bound at residue Glu155. Gly216 is a binding site for NADPH. 1-deoxy-D-xylulose 5-phosphate is bound by residues Ser223, Asn228, Lys229, and Glu232. A Mn(2+)-binding site is contributed by Glu232.

The protein belongs to the DXR family. Requires Mg(2+) as cofactor. It depends on Mn(2+) as a cofactor.

The catalysed reaction is 2-C-methyl-D-erythritol 4-phosphate + NADP(+) = 1-deoxy-D-xylulose 5-phosphate + NADPH + H(+). The protein operates within isoprenoid biosynthesis; isopentenyl diphosphate biosynthesis via DXP pathway; isopentenyl diphosphate from 1-deoxy-D-xylulose 5-phosphate: step 1/6. Its function is as follows. Catalyzes the NADPH-dependent rearrangement and reduction of 1-deoxy-D-xylulose-5-phosphate (DXP) to 2-C-methyl-D-erythritol 4-phosphate (MEP). This Bordetella parapertussis (strain 12822 / ATCC BAA-587 / NCTC 13253) protein is 1-deoxy-D-xylulose 5-phosphate reductoisomerase.